The sequence spans 654 residues: tRNA 5-methylaminomethyl-2-thiouridine biosynthesis bifunctional protein MnmC (654 aa).

The tract at residues 1 to 236 (MPTLLQHAQI…KWEVMSGAYV (236 aa)) is tRNA (mnm(5)s(2)U34)-methyltransferase. The segment at 262–654 (IGAGLAGSSS…FGLRRLIRGK (393 aa)) is FAD-dependent cmnm(5)s(2)U34 oxidoreductase.

The protein in the N-terminal section; belongs to the methyltransferase superfamily. tRNA (mnm(5)s(2)U34)-methyltransferase family. It in the C-terminal section; belongs to the DAO family. FAD is required as a cofactor.

The protein localises to the cytoplasm. The enzyme catalyses 5-aminomethyl-2-thiouridine(34) in tRNA + S-adenosyl-L-methionine = 5-methylaminomethyl-2-thiouridine(34) in tRNA + S-adenosyl-L-homocysteine + H(+). Functionally, catalyzes the last two steps in the biosynthesis of 5-methylaminomethyl-2-thiouridine (mnm(5)s(2)U) at the wobble position (U34) in tRNA. Catalyzes the FAD-dependent demodification of cmnm(5)s(2)U34 to nm(5)s(2)U34, followed by the transfer of a methyl group from S-adenosyl-L-methionine to nm(5)s(2)U34, to form mnm(5)s(2)U34. In Pseudomonas putida (strain ATCC 47054 / DSM 6125 / CFBP 8728 / NCIMB 11950 / KT2440), this protein is tRNA 5-methylaminomethyl-2-thiouridine biosynthesis bifunctional protein MnmC.